The primary structure comprises 485 residues: uncharacterized protein (485 aa).

Helical transmembrane passes span 13-33, 38-58, 79-99, 111-131, 160-180, 211-231, 234-254, 297-317, 321-341, 365-385, 388-408, 420-440, and 445-465; these read WSAL…VILS, PFEF…DMLA, ALYW…IILS, LSFL…GQQY, VIIG…LLTV, LLFS…SSIT, IVAR…FNVA, INFP…YLVF, WLFI…RMVA, IIIF…VGAA, FLIC…KPVL, FIPF…DIYI, and LTFF…TIFI.

The protein belongs to the polysaccharide synthase family.

It localises to the cell membrane. This is an uncharacterized protein from Klebsiella pneumoniae.